The chain runs to 812 residues: MAPSNGHRNGKHAKSSNKSGNLKRKRVQEDLSSLIKRVEDLDLKAKYESFSDLPISEPTLSGLTSSHFKTLTDIQSRAISHALKGRDVLGAAKTGSGKTLAFLVPILENLYRKQWSDHDGLGALIISPTRELAIQIFEVLRKIGRYHTFSAGLVIGGKSLKEEQERLGRMNILVCTPGRMLQHLDQTAFFETYNLQMLVLDEADRIMDMGFQKTVDAIIGHLPPERQTLLFSATQTKKVSDLARLSLQDPEYVAVHEAASSATPSKLQQHYVVTPLPQKLDTLWSFIRSNLKSKTIVFMSSGKQVRFVYESFRHMQPGIPLLHLHGRQKQGGRLDITTRFSQAQHAVLFSTDVAARGLDFPAVDWVIQLDCPEDADTYIHRVGRTARYERDGRAVLFLDPSEEKGMLRRLEQKRVTVERINVRANKQQSIKNQLQNMCFKDPELKYLGQKAFISYVKSVYIQKDKETFNLKELKLDDFAASLGLPGAPRIKFIKGDDTKERKNASRATAYLTSGDEESDEEGGKKKQPKEKEVRTKYDRMFERRNQDVLAEHYSKLINDDGTIADSKNTEEADEDEDFLSVKRRFDAGDDALHAEDSSASDSDASDSEAEDHTEKKDPKVVKISDKDTLVIDSKRREKLLKSKKKLLKFKGKGTKLVYDDEGNAHELYEMEDEEAFKARGDAKEQQARFLAEEAARTQRADMEDKEIAKQKRREKKEKRKARERELLAEEEREERVAQLVPFDEDEDMGDAGGYSQSSDGEEEAPRPSKRAKVEEPKAVPWYKKEAGKKNDAGEKQIQTLEDLESLATGLLG.

Positions 1–28 (MAPSNGHRNGKHAKSSNKSGNLKRKRVQ) are disordered. Basic residues predominate over residues 8–26 (RNGKHAKSSNKSGNLKRKR). Residues 48-76 (ESFSDLPISEPTLSGLTSSHFKTLTDIQS) carry the Q motif motif. The Helicase ATP-binding domain occupies 79 to 253 (ISHALKGRDV…RLSLQDPEYV (175 aa)). Residue 92-99 (AKTGSGKT) participates in ATP binding. The DEAD box signature appears at 201 to 204 (DEAD). Residues 279-438 (KLDTLWSFIR…SIKNQLQNMC (160 aa)) enclose the Helicase C-terminal domain. 3 disordered regions span residues 503-538 (NASRATAYLTSGDEESDEEGGKKKQPKEKEVRTKYD), 560-626 (DGTI…ISDK), and 687-797 (ARFL…EKQI). 4 stretches are compositionally biased toward basic and acidic residues: residues 521–538 (EGGKKKQPKEKEVRTKYD), 579–596 (LSVKRRFDAGDDALHAED), 610–626 (EDHTEKKDPKVVKISDK), and 687–709 (ARFLAEEAARTQRADMEDKEIAK). Over residues 710–719 (QKRREKKEKR) the composition is skewed to basic residues. Basic and acidic residues-rich tracts occupy residues 720–736 (KARERELLAEEEREERV) and 763–794 (EAPRPSKRAKVEEPKAVPWYKKEAGKKNDAGE).

The protein belongs to the DEAD box helicase family. DDX10/DBP4 subfamily. As to quaternary structure, interacts with the U3 and U14 snoRNAs. Associates with pre-ribosomal complexes.

It is found in the nucleus. The protein resides in the nucleolus. It carries out the reaction ATP + H2O = ADP + phosphate + H(+). In terms of biological role, ATP-dependent RNA helicase required for ribosome biogenesis. Involved in the release of U14 snoRNA in pre-ribosomal complexes. Required for pre-rRNA cleavage at site A2. This is ATP-dependent RNA helicase dbp4 (dbp4) from Emericella nidulans (strain FGSC A4 / ATCC 38163 / CBS 112.46 / NRRL 194 / M139) (Aspergillus nidulans).